The sequence spans 945 residues: Kinesin-like protein KIN-UA (945 aa).

The segment at 1–54 is disordered; it reads MAANGRASVRPVERHGAPPRPAGRSRSVAPPSRRPSPSPSRARPAAADNDGGSD. Residues 22–31 are compositionally biased toward low complexity; that stretch reads AGRSRSVAPP. The Kinesin motor domain maps to 57 to 399; the sequence is RVRVAVRLRP…IMFGQRAMKI (343 aa). 142–149 contributes to the ATP binding site; it reads GQTGTGKT. A D-BOX motif is present at residues 369–377; that stretch reads RTSLIVTIG. Positions 415–644 form a coiled coil; sequence YKKVEHEVDH…ILRLKQSLAD (230 aa). ARM repeat units follow at residues 683-722, 724-764, 766-806, and 808-847; these read RSNI…NLAA, DVNQ…NLAM, GSNQ…NLCG, and EKLH…NFAK.

It belongs to the TRAFAC class myosin-kinesin ATPase superfamily. Kinesin family. Ungrouped subfamily.

Its subcellular location is the cytoplasm. It localises to the cytoskeleton. The protein is Kinesin-like protein KIN-UA of Oryza sativa subsp. japonica (Rice).